Reading from the N-terminus, the 301-residue chain is Probable alpha-L-glutamate ligase 1 (301 aa).

One can recognise an ATP-grasp domain in the interval 104–287 (LQLLSRKGIG…VTEPIVEYIE (184 aa)). ATP-binding positions include Lys141, 178–179 (EY), Asp187, and 211–213 (RSN). Mg(2+) contacts are provided by Asp248, Glu260, and Asn262. The Mn(2+) site is built by Asp248, Glu260, and Asn262.

It belongs to the RimK family. The cofactor is Mg(2+). Mn(2+) serves as cofactor.

The chain is Probable alpha-L-glutamate ligase 1 from Shewanella sp. (strain W3-18-1).